Consider the following 134-residue polypeptide: MENKKTIYFLCTGNSCRSQMAEAWGKQFLEDKWNVYSAGIEAHGVNPNAIKAMNEVNIDITNQTSDIIDATILNSADLVVTLCSHADAVCPSTPPHVNRVHWGFDDPAGKEWSEFQRVRDEIGEHIKRFSETGE.

Residues C11, C83, and C90 each act as nucleophile in the active site. Intrachain disulfides connect C11–C83 and C83–C90.

It belongs to the low molecular weight phosphotyrosine protein phosphatase family. Thioredoxin-coupled ArsC subfamily.

Its subcellular location is the cytoplasm. It catalyses the reaction arsenate + [thioredoxin]-dithiol + H(+) = arsenite + [thioredoxin]-disulfide + H2O. Its function is as follows. Catalyzes the reduction of arsenate [As(V)] to arsenite [As(III)]. The chain is Arsenate reductase from Bacillus cereus (strain G9842).